The sequence spans 226 residues: ATP synthase subunit C lysine N-methyltransferase (226 aa).

A helical membrane pass occupies residues 35-55; that stretch reads VIGGTLVALYAVATPFVAPAL. Positions 48–82 are required for mitochondrial location; the sequence is TPFVAPALRKLCLPYVPATTTQVKNVLKMLRSRTG.

Belongs to the ANT/ATPSC lysine N-methyltransferase family.

It localises to the mitochondrion membrane. In terms of biological role, mitochondrial protein-lysine N-methyltransferase that promotes chronic pain. Involved in persistent inflammatory and neuropathic pain: methyltransferase activity in the mitochondria of sensory neurons promotes chronic pain via a pathway that depends on the production of reactive oxygen species (ROS) and on the engagement of spinal cord microglia. Protein-lysine N-methyltransferase activity is dependent on S-adenosyl-L-methionine. This Xenopus laevis (African clawed frog) protein is ATP synthase subunit C lysine N-methyltransferase (atpsckmt).